The primary structure comprises 813 residues: Ankyrin repeat domain-containing protein SOWAHB (813 aa).

Disordered stretches follow at residues 142–256 (SAAP…QSLS) and 400–436 (ETCGSEESDSGEGGDCDTEPRDNDDADDDTFSSDSHK). Residues 158–176 (MSEKARVNPSHWDTKRYYP) show a composition bias toward basic and acidic residues. A compositionally biased stretch (pro residues) spans 177–189 (EDPPVPDSLPVSP). Residues 191–202 (CTNTRQSSFTST) show a composition bias toward polar residues. Over residues 208–244 (HSLSSNNLSSSFSSPESPGLVAKPYNASPSPAGSSPN) the composition is skewed to low complexity. Positions 245 to 256 (IREQTPKSQSLS) are enriched in polar residues. The span at 400–416 (ETCGSEESDSGEGGDCD) shows a compositional bias: acidic residues. ANK repeat units lie at residues 657-686 (TGYTALHWFAKHGCIDLFNKVVIGAKKAGI) and 696-726 (NGYTPLHIAAIHGHHKVAIMLVEKLKVNVKV).

This sequence belongs to the SOWAH family.

This Xenopus laevis (African clawed frog) protein is Ankyrin repeat domain-containing protein SOWAHB (sowahb).